We begin with the raw amino-acid sequence, 315 residues long: Ribosomal protein L11 methyltransferase (315 aa).

S-adenosyl-L-methionine-binding residues include T164, G185, D207, and N249.

Belongs to the methyltransferase superfamily. PrmA family.

The protein localises to the cytoplasm. It catalyses the reaction L-lysyl-[protein] + 3 S-adenosyl-L-methionine = N(6),N(6),N(6)-trimethyl-L-lysyl-[protein] + 3 S-adenosyl-L-homocysteine + 3 H(+). In terms of biological role, methylates ribosomal protein L11. The sequence is that of Ribosomal protein L11 methyltransferase from Lactobacillus johnsonii (strain CNCM I-12250 / La1 / NCC 533).